We begin with the raw amino-acid sequence, 621 residues long: 1-deoxy-D-xylulose-5-phosphate synthase (621 aa).

Thiamine diphosphate-binding positions include His80 and 121-123 (GHS). Position 152 (Asp152) interacts with Mg(2+). Residues 153 to 154 (GA), Asn181, Tyr288, and Glu370 each bind thiamine diphosphate. Asn181 serves as a coordination point for Mg(2+).

It belongs to the transketolase family. DXPS subfamily. In terms of assembly, homodimer. It depends on Mg(2+) as a cofactor. Thiamine diphosphate serves as cofactor.

The catalysed reaction is D-glyceraldehyde 3-phosphate + pyruvate + H(+) = 1-deoxy-D-xylulose 5-phosphate + CO2. Its pathway is metabolic intermediate biosynthesis; 1-deoxy-D-xylulose 5-phosphate biosynthesis; 1-deoxy-D-xylulose 5-phosphate from D-glyceraldehyde 3-phosphate and pyruvate: step 1/1. In terms of biological role, catalyzes the acyloin condensation reaction between C atoms 2 and 3 of pyruvate and glyceraldehyde 3-phosphate to yield 1-deoxy-D-xylulose-5-phosphate (DXP). This chain is 1-deoxy-D-xylulose-5-phosphate synthase, found in Edwardsiella ictaluri (strain 93-146).